Here is a 400-residue protein sequence, read N- to C-terminus: Inositol polyphosphate 1-phosphatase (400 aa).

A Li(+)-binding site is contributed by Asp-54. Glu-79 is a Mg(2+) binding site. Glu-80 is a binding site for Li(+). Residues Asp-153 and Ile-155 each contribute to the Mg(2+) site. Residues Asp-156, Ser-157, and Thr-158 each coordinate 1D-myo-inositol 1,4-bisphosphate. A compositionally biased stretch (polar residues) spans 238-257 (STRSNSEAQSQGTQNPSSEG). Residues 238–258 (STRSNSEAQSQGTQNPSSEGS) are disordered. 1D-myo-inositol 1,4-bisphosphate is bound by residues Ser-268, Lys-270, Gly-290, Ala-291, Lys-294, and Thr-312. Position 317 (Asp-317) interacts with Mg(2+). Position 318 is a phosphoserine (Ser-318).

It belongs to the inositol monophosphatase superfamily. Monomer. Mg(2+) is required as a cofactor.

It carries out the reaction 1D-myo-inositol 1,4-bisphosphate + H2O = 1D-myo-inositol 4-phosphate + phosphate. The enzyme catalyses 1D-myo-inositol 1,3,4-trisphosphate + H2O = 1D-myo-inositol 3,4-bisphosphate + phosphate. The protein operates within signal transduction; phosphatidylinositol signaling pathway. Its activity is regulated as follows. Inhibited by Li(+). In terms of biological role, mg(2+)-dependent phosphatase that catalyzes the hydrolysis of the 1-position phosphate from inositol 1,4-bisphosphate and inositol 1,3,4-trisphosphate and participates in inositol phosphate metabolism. This Bos taurus (Bovine) protein is Inositol polyphosphate 1-phosphatase.